The sequence spans 184 residues: Trypsin/chymotrypsin inhibitor (184 aa).

Intrachain disulfides connect Cys-39/Cys-84 and Cys-136/Cys-147.

Belongs to the protease inhibitor I3 (leguminous Kunitz-type inhibitor) family. Homodimer.

Inhibits trypsin and alpha-chymotrypsin. This is Trypsin/chymotrypsin inhibitor from Alocasia macrorrhizos (Giant taro).